Reading from the N-terminus, the 344-residue chain is Phenylalanine--tRNA ligase alpha subunit (344 aa).

Residue Glu-256 coordinates Mg(2+).

The protein belongs to the class-II aminoacyl-tRNA synthetase family. Phe-tRNA synthetase alpha subunit type 1 subfamily. As to quaternary structure, tetramer of two alpha and two beta subunits. Mg(2+) serves as cofactor.

The protein resides in the cytoplasm. It catalyses the reaction tRNA(Phe) + L-phenylalanine + ATP = L-phenylalanyl-tRNA(Phe) + AMP + diphosphate + H(+). The chain is Phenylalanine--tRNA ligase alpha subunit from Bacillus cytotoxicus (strain DSM 22905 / CIP 110041 / 391-98 / NVH 391-98).